A 447-amino-acid polypeptide reads, in one-letter code: Ribosomal protein uS12 methylthiotransferase RimO (447 aa).

An MTTase N-terminal domain is found at 4-114 (PKVGFVSLGC…VMEAVHEYVP (111 aa)). Residues Cys-13, Cys-49, Cys-78, Cys-147, Cys-151, and Cys-154 each contribute to the [4Fe-4S] cluster site. Positions 133–370 (LTPKHYAYLK…MQVQQEISAA (238 aa)) constitute a Radical SAM core domain. Residues 373–443 (QKRIGQTMTV…EYDLFAKLIQ (71 aa)) form the TRAM domain.

The protein belongs to the methylthiotransferase family. RimO subfamily. [4Fe-4S] cluster is required as a cofactor.

The protein localises to the cytoplasm. It carries out the reaction L-aspartate(89)-[ribosomal protein uS12]-hydrogen + (sulfur carrier)-SH + AH2 + 2 S-adenosyl-L-methionine = 3-methylsulfanyl-L-aspartate(89)-[ribosomal protein uS12]-hydrogen + (sulfur carrier)-H + 5'-deoxyadenosine + L-methionine + A + S-adenosyl-L-homocysteine + 2 H(+). Its function is as follows. Catalyzes the methylthiolation of an aspartic acid residue of ribosomal protein uS12. The protein is Ribosomal protein uS12 methylthiotransferase RimO of Acinetobacter baylyi (strain ATCC 33305 / BD413 / ADP1).